The chain runs to 466 residues: Cysteine--tRNA ligase (466 aa).

Cys29 is a binding site for Zn(2+). Positions 31 to 41 (PTVYDFAHIGN) match the 'HIGH' region motif. Residues Cys210, His235, and Glu239 each coordinate Zn(2+). Positions 267–271 (KMSKS) match the 'KMSKS' region motif. ATP is bound at residue Lys270.

The protein belongs to the class-I aminoacyl-tRNA synthetase family. Monomer. Zn(2+) serves as cofactor.

Its subcellular location is the cytoplasm. It catalyses the reaction tRNA(Cys) + L-cysteine + ATP = L-cysteinyl-tRNA(Cys) + AMP + diphosphate. The chain is Cysteine--tRNA ligase from Solibacter usitatus (strain Ellin6076).